A 295-amino-acid polypeptide reads, in one-letter code: Ribosomal protein L11 methyltransferase (295 aa).

S-adenosyl-L-methionine-binding residues include Thr-145, Gly-166, Asp-188, and Asn-230.

This sequence belongs to the methyltransferase superfamily. PrmA family.

The protein localises to the cytoplasm. The catalysed reaction is L-lysyl-[protein] + 3 S-adenosyl-L-methionine = N(6),N(6),N(6)-trimethyl-L-lysyl-[protein] + 3 S-adenosyl-L-homocysteine + 3 H(+). Its function is as follows. Methylates ribosomal protein L11. This Haemophilus influenzae (strain PittEE) protein is Ribosomal protein L11 methyltransferase.